Consider the following 130-residue polypeptide: Histone H2B.1 (130 aa).

Positions 1–19 (MAPKAEKKPASKAPAEKKP) are enriched in basic and acidic residues. The disordered stretch occupies residues 1–39 (MAPKAEKKPASKAPAEKKPAAKKTASATGTKKRSKTRKE). 2 positions are modified to N6-acetyllysine; alternate: lysine 7 and lysine 8. Glycyl lysine isopeptide (Lys-Gly) (interchain with G-Cter in SUMO); alternate cross-links involve residues lysine 7 and lysine 8. Serine 11 carries the post-translational modification Phosphoserine. Lysine 12 carries the post-translational modification N6-acetyllysine. Lysine 17 bears the N6-acetyllysine; alternate mark. Lysine 17 participates in a covalent cross-link: Glycyl lysine isopeptide (Lys-Gly) (interchain with G-Cter in SUMO); alternate. Lysine 18 participates in a covalent cross-link: Glycyl lysine isopeptide (Lys-Gly) (interchain with G-Cter in SUMO). Lysine 124 participates in a covalent cross-link: Glycyl lysine isopeptide (Lys-Gly) (interchain with G-Cter in ubiquitin).

It belongs to the histone H2B family. In terms of assembly, the nucleosome is a histone octamer containing two molecules each of H2A, H2B, H3 and H4 assembled in one H3-H4 heterotetramer and two H2A-H2B heterodimers. The octamer wraps approximately 147 bp of DNA. In terms of processing, monoubiquitinated by the UBC2-BRE1 complex to form H2BK123ub1. H2BK123ub1 gives a specific tag for epigenetic transcriptional activation and is also prerequisite for H3K4me and H3K79me formation. H2BK123ub1 also modulates the formation of double-strand breaks during meiosis and is a prerequisite for DNA-damage checkpoint activation. Phosphorylated by STE20 to form H2BS10ph during progression through meiotic prophase. May be correlated with chromosome condensation. Post-translationally, acetylated by GCN5 to form H2BK11ac and H2BK16ac. H2BK16ac can also be formed by ESA1. Acetylation of N-terminal lysines and particularly formation of H2BK11acK16ac has a positive effect on transcription. In terms of processing, sumoylation to form H2BK6su or H2BK7su, and probably also H2BK16su or H2BK17su, occurs preferentially near the telomeres and represses gene transcription.

It is found in the nucleus. The protein resides in the chromosome. Core component of nucleosome. Nucleosomes wrap and compact DNA into chromatin, limiting DNA accessibility to the cellular machineries which require DNA as a template. Histones thereby play a central role in transcription regulation, DNA repair, DNA replication and chromosomal stability. DNA accessibility is regulated via a complex set of post-translational modifications of histones, also called histone code, and nucleosome remodeling. In Debaryomyces hansenii (strain ATCC 36239 / CBS 767 / BCRC 21394 / JCM 1990 / NBRC 0083 / IGC 2968) (Yeast), this protein is Histone H2B.1 (HTB1).